The chain runs to 93 residues: MPEKALVTLRFGPYSSSSGLVDHRVSRLQGLRAVLVSDGHQVILEEILDRNTVELIVNGELVFRCNIKELDFGGDGQLDPLCEEARKAVKDAY.

The protein belongs to the UPF0728 family.

The chain is UPF0728 protein C10orf53 homolog from Xenopus tropicalis (Western clawed frog).